The chain runs to 251 residues: MSVSPVPIVSTPVAVSESPAGSPVQPAVPVTVRWRGSEAYETSFDAMRAFTDTRTADTGDEIWVVEHPPVYTLGQAGDPAHLLVADSGVPLVKVDRGGQITYHGPGQIVVYLLLDLRRRKLMVRTLVTKIEEAVIETLAAYNLASVRKAGAPGIYVASGVHEGAKIAALGLKIRNGCSYHGLSLNVKMDLRPFLAINPCGYAGLETVDMASLEVAADWNDVAHTLVGRLIANLDGESAAADKPQALEHSND.

Residues 56–237 enclose the BPL/LPL catalytic domain; that stretch reads ADTGDEIWVV…RLIANLDGES (182 aa). Residues 96–103, 168–170, and 181–183 contribute to the substrate site; these read RGGQITYH, ALG, and GLS. C199 acts as the Acyl-thioester intermediate in catalysis.

The protein belongs to the LipB family.

It is found in the cytoplasm. The catalysed reaction is octanoyl-[ACP] + L-lysyl-[protein] = N(6)-octanoyl-L-lysyl-[protein] + holo-[ACP] + H(+). It participates in protein modification; protein lipoylation via endogenous pathway; protein N(6)-(lipoyl)lysine from octanoyl-[acyl-carrier-protein]: step 1/2. Its function is as follows. Catalyzes the transfer of endogenously produced octanoic acid from octanoyl-acyl-carrier-protein onto the lipoyl domains of lipoate-dependent enzymes. Lipoyl-ACP can also act as a substrate although octanoyl-ACP is likely to be the physiological substrate. The chain is Octanoyltransferase from Burkholderia ambifaria (strain MC40-6).